A 513-amino-acid chain; its full sequence is Putative fucosyltransferase-like protein (513 aa).

The segment at 1–34 (MGVFSNLRGPRAGATHDEFPATNGSPSSSSSPSS) is disordered. Over 1-39 (MGVFSNLRGPRAGATHDEFPATNGSPSSSSSPSSSIKRK) the chain is Cytoplasmic. The segment covering 25–34 (SPSSSSSPSS) has biased composition (low complexity). Residues 40 to 60 (LSNLLPLCVALVVIAEIGFLG) traverse the membrane as a helical; Signal-anchor for type II membrane protein segment. The Lumenal segment spans residues 61-513 (RLDKVALVDT…PCAKFEVVFV (453 aa)). 2 N-linked (GlcNAc...) asparagine glycosylation sites follow: N348 and N493.

This sequence belongs to the glycosyltransferase 10 family.

Its subcellular location is the golgi apparatus. It localises to the golgi stack membrane. The protein operates within protein modification; protein glycosylation. May be involved in cell wall biosynthesis. May act as a fucosyltransferase. The polypeptide is Putative fucosyltransferase-like protein (FUT12) (Arabidopsis thaliana (Mouse-ear cress)).